The primary structure comprises 243 residues: MLQNIRIVLVETSHTGNMGSVARAMKTMGLTNLWLVNPLVKPDSQAIALAAGASDVIGNAQIVDTLDEALAGCSLVVGTSARSRTLPWPMLDPRECGLKSVAEAANTPVALVFGRERVGLTNDELQKCHYHVAIAANPEYSSLNLAMAVQVIAYEVRMAWLATQENGDAADHEEMPYPLVDDLERFYGHLEQTLLSTGFIRENHPGQVMNKLRRLFTRARPESQELNILRGILASIEQQNKGK.

Residues 79 to 81 (TSA), glycine 114, isoleucine 134, and 141 to 143 (SSL) each bind S-adenosyl-L-methionine.

This sequence belongs to the class IV-like SAM-binding methyltransferase superfamily. RNA methyltransferase TrmH family. In terms of assembly, homodimer.

The protein resides in the cytoplasm. The enzyme catalyses cytidine(32) in tRNA + S-adenosyl-L-methionine = 2'-O-methylcytidine(32) in tRNA + S-adenosyl-L-homocysteine + H(+). The catalysed reaction is uridine(32) in tRNA + S-adenosyl-L-methionine = 2'-O-methyluridine(32) in tRNA + S-adenosyl-L-homocysteine + H(+). Its function is as follows. Catalyzes the formation of 2'O-methylated cytidine (Cm32) or 2'O-methylated uridine (Um32) at position 32 in tRNA. This Salmonella choleraesuis (strain SC-B67) protein is tRNA (cytidine/uridine-2'-O-)-methyltransferase TrmJ (trmJ).